Here is a 59-residue protein sequence, read N- to C-terminus: Large ribosomal subunit protein uL30 (59 aa).

Belongs to the universal ribosomal protein uL30 family. As to quaternary structure, part of the 50S ribosomal subunit.

The chain is Large ribosomal subunit protein uL30 from Leptospira borgpetersenii serovar Hardjo-bovis (strain JB197).